The primary structure comprises 281 residues: Acetylglutamate kinase (281 aa).

Substrate-binding positions include 64–65 (GG), R86, and N179.

It belongs to the acetylglutamate kinase family. ArgB subfamily.

The protein localises to the cytoplasm. The catalysed reaction is N-acetyl-L-glutamate + ATP = N-acetyl-L-glutamyl 5-phosphate + ADP. The protein operates within amino-acid biosynthesis; L-arginine biosynthesis; N(2)-acetyl-L-ornithine from L-glutamate: step 2/4. Catalyzes the ATP-dependent phosphorylation of N-acetyl-L-glutamate. The sequence is that of Acetylglutamate kinase from Campylobacter curvus (strain 525.92).